The chain runs to 644 residues: 1-deoxy-D-xylulose-5-phosphate synthase (644 aa).

Thiamine diphosphate contacts are provided by residues His-78 and Gly-120–Ala-122. Asp-150 is a Mg(2+) binding site. Thiamine diphosphate-binding positions include Ala-151–Ala-152, Asn-179, and Glu-374. Asn-179 lines the Mg(2+) pocket.

This sequence belongs to the transketolase family. DXPS subfamily. Homodimer. Requires Mg(2+) as cofactor. Thiamine diphosphate serves as cofactor.

The catalysed reaction is D-glyceraldehyde 3-phosphate + pyruvate + H(+) = 1-deoxy-D-xylulose 5-phosphate + CO2. It participates in metabolic intermediate biosynthesis; 1-deoxy-D-xylulose 5-phosphate biosynthesis; 1-deoxy-D-xylulose 5-phosphate from D-glyceraldehyde 3-phosphate and pyruvate: step 1/1. Its function is as follows. Catalyzes the acyloin condensation reaction between C atoms 2 and 3 of pyruvate and glyceraldehyde 3-phosphate to yield 1-deoxy-D-xylulose-5-phosphate (DXP). The sequence is that of 1-deoxy-D-xylulose-5-phosphate synthase from Chlamydia pneumoniae (Chlamydophila pneumoniae).